Here is a 693-residue protein sequence, read N- to C-terminus: Iron-sulfur clusters transporter atm1, mitochondrial (693 aa).

The N-terminal 28 residues, 1 to 28 (MLERCPWKLISSPRNIPARSFLNSRGTY), are a transit peptide targeting the mitochondrion. The Mitochondrial matrix segment spans residues 29–118 (LVLRKSNILP…PKGKTNLKVR (90 aa)). A helical transmembrane segment spans residues 119–140 (VVSALALLVAAKILNVQVPFYF). The 291-residue stretch at 119–409 (VVSALALLVA…LGSVYREMRQ (291 aa)) folds into the ABC transmembrane type-1 domain. Over 141–163 (KSIIDTMNTTLVQEVGALWSTVG) the chain is Mitochondrial intermembrane. The helical transmembrane segment at 164 to 187 (AVVLGYGFARIFSTVFQELRNSVF) threads the bilayer. At 188–236 (AIVSQSAIRSVSSNVYQHLLNLDMNFHLSKQTGSITRAMDRGTKGISFI) the chain is on the mitochondrial matrix side. The helical transmembrane segment at 237–260 (LSSMVLHIIPITLEIAMVSGILTY) threads the bilayer. Residue Lys-261 is a topological domain, mitochondrial intermembrane. Residues 262 to 282 (YGPSFSAIAATTVALYALFTV) form a helical membrane-spanning segment. Topologically, residues 283–348 (RTTSWRTVFR…ANVKVASSLA (66 aa)) are mitochondrial matrix. Glutathione contacts are provided by residues 288–292 (RTVFR) and 351–354 (NSGQ). A helical membrane pass occupies residues 349–367 (FLNSGQAIIFSTALTLMMY). Over 368 to 382 (MGCRGIVTSNLTVGD) the chain is Mitochondrial intermembrane. The chain crosses the membrane as a helical span at residues 383-404 (LVMINQLVFQLSIPLNFLGSVY). Gly-401 contacts glutathione. Topologically, residues 405 to 693 (REMRQAFTDM…FGESNKSGDA (289 aa)) are mitochondrial matrix. Residues 443-679 (IQFDNVHFSY…NSVYTSMWHS (237 aa)) enclose the ABC transporter domain. Residues Tyr-452 and 476–487 (GASGCGKSTILR) contribute to the ATP site.

Belongs to the ABC transporter superfamily. ABCB family. Heavy Metal importer (TC 3.A.1.210) subfamily. Homodimer.

The protein localises to the mitochondrion inner membrane. In terms of biological role, performs an essential function in the generation of cytoplasmic iron-sulfur proteins by mediating the ATP-dependent export of Fe/S cluster precursors synthesized by nfs1 and other mitochondrial proteins. Hydrolyzes ATP. Binds glutathione and may function by transporting a glutathione-conjugated iron-sulfur compound. The sequence is that of Iron-sulfur clusters transporter atm1, mitochondrial from Schizosaccharomyces pombe (strain 972 / ATCC 24843) (Fission yeast).